Here is a 153-residue protein sequence, read N- to C-terminus: SsrA-binding protein (153 aa).

This sequence belongs to the SmpB family.

Its subcellular location is the cytoplasm. In terms of biological role, required for rescue of stalled ribosomes mediated by trans-translation. Binds to transfer-messenger RNA (tmRNA), required for stable association of tmRNA with ribosomes. tmRNA and SmpB together mimic tRNA shape, replacing the anticodon stem-loop with SmpB. tmRNA is encoded by the ssrA gene; the 2 termini fold to resemble tRNA(Ala) and it encodes a 'tag peptide', a short internal open reading frame. During trans-translation Ala-aminoacylated tmRNA acts like a tRNA, entering the A-site of stalled ribosomes, displacing the stalled mRNA. The ribosome then switches to translate the ORF on the tmRNA; the nascent peptide is terminated with the 'tag peptide' encoded by the tmRNA and targeted for degradation. The ribosome is freed to recommence translation, which seems to be the essential function of trans-translation. This is SsrA-binding protein from Cytophaga hutchinsonii (strain ATCC 33406 / DSM 1761 / CIP 103989 / NBRC 15051 / NCIMB 9469 / D465).